The primary structure comprises 403 residues: Nucleolar protein 13 (403 aa).

2 stretches are compositionally biased toward basic and acidic residues: residues 1-35 (MSETELSKEDAVTKKDNEEQVKKALLDPTKKRKAE) and 75-97 (KSIEEYKEDAEKKKSGASEKDAQ). Disordered stretches follow at residues 1-43 (MSET…IDLK) and 72-116 (IDPK…EVVK). Residue Ser2 is modified to N-acetylserine. At Ser2 the chain carries Phosphoserine. Residues 99 to 108 (EESTINTPTG) show a composition bias toward polar residues. Residue Thr105 is modified to Phosphothreonine. RRM domains follow at residues 125–219 (YGVW…DSEN) and 239–317 (RILF…YGED). Basic and acidic residues predominate over residues 313 to 329 (EYGEDRSKRQVRKKVEN). The segment at 313-403 (EYGEDRSKRQ…PSQGKKVKFD (91 aa)) is disordered. Polar residues predominate over residues 330–344 (VSRNNSSSFDISNNK). The residue at position 335 (Ser335) is a Phosphoserine. The segment covering 345-361 (GYDRAGQDNGSKPEYKR) has biased composition (basic and acidic residues). Residues 371 to 381 (DSNNRTKSSVA) show a composition bias toward polar residues.

The protein localises to the nucleus. It is found in the nucleolus. This chain is Nucleolar protein 13 (NOP13), found in Saccharomyces cerevisiae (strain ATCC 204508 / S288c) (Baker's yeast).